The sequence spans 151 residues: 3-dehydroquinate dehydratase (151 aa).

Y26 acts as the Proton acceptor in catalysis. Substrate is bound by residues N75, H81, and D88. H101 (proton donor) is an active-site residue. Substrate-binding positions include 102–103 and R112; that span reads LS.

This sequence belongs to the type-II 3-dehydroquinase family. In terms of assembly, homododecamer.

The catalysed reaction is 3-dehydroquinate = 3-dehydroshikimate + H2O. The protein operates within metabolic intermediate biosynthesis; chorismate biosynthesis; chorismate from D-erythrose 4-phosphate and phosphoenolpyruvate: step 3/7. Catalyzes a trans-dehydration via an enolate intermediate. The protein is 3-dehydroquinate dehydratase of Shewanella denitrificans (strain OS217 / ATCC BAA-1090 / DSM 15013).